The following is a 101-amino-acid chain: Urease subunit gamma (101 aa).

The protein belongs to the urease gamma subunit family. Heterotrimer of UreA (gamma), UreB (beta) and UreC (alpha) subunits. Three heterotrimers associate to form the active enzyme.

Its subcellular location is the cytoplasm. The catalysed reaction is urea + 2 H2O + H(+) = hydrogencarbonate + 2 NH4(+). Its pathway is nitrogen metabolism; urea degradation; CO(2) and NH(3) from urea (urease route): step 1/1. The protein is Urease subunit gamma of Ureaplasma urealyticum (Ureaplasma urealyticum biotype 2).